An 88-amino-acid polypeptide reads, in one-letter code: UPF0335 protein WRi_003770 (88 aa).

The protein belongs to the UPF0335 family.

In Wolbachia sp. subsp. Drosophila simulans (strain wRi), this protein is UPF0335 protein WRi_003770.